The sequence spans 316 residues: Acetaldehyde dehydrogenase (316 aa).

12–15 serves as a coordination point for NAD(+); that stretch reads SGNI. The active-site Acyl-thioester intermediate is the Cys132. NAD(+)-binding positions include 163–171 and Asn289; that span reads SAGPGTRAN.

Belongs to the acetaldehyde dehydrogenase family.

The catalysed reaction is acetaldehyde + NAD(+) + CoA = acetyl-CoA + NADH + H(+). The chain is Acetaldehyde dehydrogenase (bphG) from Bordetella avium (strain 197N).